A 448-amino-acid polypeptide reads, in one-letter code: Omega-6 fatty acid desaturase, chloroplastic (448 aa).

A chloroplast-targeting transit peptide spans 1–69 (MASRIADSLF…VKRRIGCIKA (69 aa)). N-acetylvaline is present on Val-70. Helical transmembrane passes span 124 to 144 (LKALKSVLISVTSYTLGLFMI) and 149 to 169 (WYLLPLAWAWTGTAITGFFVI). The short motif at 171-175 (HDCAH) is the Histidine box-1 element. The Histidine box-2 signature appears at 207 to 211 (HDRHH). Transmembrane regions (helical) follow at residues 282 to 302 (VFAFMAVGWPLIVYKVGILGW) and 303 to 323 (VKFWLMPWLGYHFWMSTFTMV). The short motif at 367-371 (HIPHH) is the Histidine box-3 element.

Belongs to the fatty acid desaturase type 1 family.

Its subcellular location is the plastid. The protein localises to the chloroplast inner membrane. It catalyses the reaction a (9Z)-octadecenoyl-containing glycerolipid + 2 reduced [2Fe-2S]-[ferredoxin] + O2 + 2 H(+) = a (9Z,12Z)-octadecadienoyl-containing glycerolipid + 2 oxidized [2Fe-2S]-[ferredoxin] + 2 H2O. It participates in lipid metabolism; polyunsaturated fatty acid biosynthesis. Functionally, chloroplast omega-6 fatty acid desaturase introduces the second double bond in the biosynthesis of 16:3 and 18:3 fatty acids, important constituents of plant membranes. It is thought to use ferredoxin as an electron donor and to act on fatty acids esterified to galactolipids, sulfolipids and phosphatidylglycerol. In Arabidopsis thaliana (Mouse-ear cress), this protein is Omega-6 fatty acid desaturase, chloroplastic.